The sequence spans 29 residues: Dermaseptin-1.2TR (29 aa).

V29 carries the valine amide modification.

Expressed by the skin glands.

It localises to the secreted. Has antimicrobial activity. The polypeptide is Dermaseptin-1.2TR (Phyllomedusa trinitatis (Trinidad leaf frog)).